A 283-amino-acid chain; its full sequence is Undecaprenyl-diphosphatase (283 aa).

7 consecutive transmembrane segments (helical) span residues 40-60 (GAAFTAIVQIGTLAAVLIYFF), 85-105 (AKMGWMIAAGTIPIVIFGLLF), 113-133 (LRSLYWISGALIGLALLLTIA), 153-173 (IGWKDALLIGLIQSIALIPGS), 193-213 (AARFSFLLSLPSVLAAGVFQL), 227-247 (LIAIIVATIVSGIVGYASIAF), and 259-279 (VFIIYRLLLGSGILLMLATGM).

It belongs to the UppP family.

The protein resides in the cell inner membrane. It carries out the reaction di-trans,octa-cis-undecaprenyl diphosphate + H2O = di-trans,octa-cis-undecaprenyl phosphate + phosphate + H(+). Catalyzes the dephosphorylation of undecaprenyl diphosphate (UPP). Confers resistance to bacitracin. This Chlorobium limicola (strain DSM 245 / NBRC 103803 / 6330) protein is Undecaprenyl-diphosphatase.